The sequence spans 332 residues: MARILDNDVMGNEEFSDRTLRPQYLREYIGQDKVKEQFAIFIEAAKRRDESLDHVLLFGPPGLGKTTMAFVIANELGVNLKQTSGPAVEKAGDLVAILNELEPGDILFIDEIHRMPMSVEEVLYSAMEDFYIDIMIGAGDTSRSIHLDLPPFTLIGATTRAGMLSNPLRARFGITGHMEYYQEKDLTEIVERTATIFEIKIDHEAARKLACRSRGTPRIANRLLKRVRDYAQIIGDGIITAQITDRALTMLDVDREGLDYIDQKILRTMIEMYQGGPVGLGTLSVNIAEERNTVEEMYEPYLIQKGFLMRTRTGRVATQKAYRHLGYPYQNT.

The interval 1-181 (MARILDNDVM…FGITGHMEYY (181 aa)) is large ATPase domain (RuvB-L). ATP-binding positions include Leu-20, Arg-21, Gly-62, Lys-65, Thr-66, Thr-67, 128–130 (EDF), Arg-171, Tyr-181, and Arg-218. Residue Thr-66 participates in Mg(2+) binding. Residues 182 to 252 (QEKDLTEIVE…ITDRALTMLD (71 aa)) form a small ATPAse domain (RuvB-S) region. The tract at residues 255–332 (REGLDYIDQK…RHLGYPYQNT (78 aa)) is head domain (RuvB-H). Residues Arg-291, Arg-310, Arg-312, and Arg-315 each contribute to the DNA site.

The protein belongs to the RuvB family. Homohexamer. Forms an RuvA(8)-RuvB(12)-Holliday junction (HJ) complex. HJ DNA is sandwiched between 2 RuvA tetramers; dsDNA enters through RuvA and exits via RuvB. An RuvB hexamer assembles on each DNA strand where it exits the tetramer. Each RuvB hexamer is contacted by two RuvA subunits (via domain III) on 2 adjacent RuvB subunits; this complex drives branch migration. In the full resolvosome a probable DNA-RuvA(4)-RuvB(12)-RuvC(2) complex forms which resolves the HJ.

The protein localises to the cytoplasm. It catalyses the reaction ATP + H2O = ADP + phosphate + H(+). In terms of biological role, the RuvA-RuvB-RuvC complex processes Holliday junction (HJ) DNA during genetic recombination and DNA repair, while the RuvA-RuvB complex plays an important role in the rescue of blocked DNA replication forks via replication fork reversal (RFR). RuvA specifically binds to HJ cruciform DNA, conferring on it an open structure. The RuvB hexamer acts as an ATP-dependent pump, pulling dsDNA into and through the RuvAB complex. RuvB forms 2 homohexamers on either side of HJ DNA bound by 1 or 2 RuvA tetramers; 4 subunits per hexamer contact DNA at a time. Coordinated motions by a converter formed by DNA-disengaged RuvB subunits stimulates ATP hydrolysis and nucleotide exchange. Immobilization of the converter enables RuvB to convert the ATP-contained energy into a lever motion, pulling 2 nucleotides of DNA out of the RuvA tetramer per ATP hydrolyzed, thus driving DNA branch migration. The RuvB motors rotate together with the DNA substrate, which together with the progressing nucleotide cycle form the mechanistic basis for DNA recombination by continuous HJ branch migration. Branch migration allows RuvC to scan DNA until it finds its consensus sequence, where it cleaves and resolves cruciform DNA. The polypeptide is Holliday junction branch migration complex subunit RuvB (Streptococcus pyogenes serotype M12 (strain MGAS9429)).